The primary structure comprises 203 residues: Probable proteasome subunit beta type-4 (203 aa).

It belongs to the peptidase T1B family. The 26S proteasome consists of a 20S proteasome core and two 19S regulatory subunits. The 20S proteasome core is composed of 28 subunits that are arranged in four stacked rings, resulting in a barrel-shaped structure. The two end rings are each formed by seven alpha subunits, and the two central rings are each formed by seven beta subunits. The catalytic chamber with the active sites is on the inside of the barrel.

It is found in the cytoplasm. The protein localises to the nucleus. Non-catalytic component of the proteasome, a multicatalytic proteinase complex which is characterized by its ability to cleave peptides with Arg, Phe, Tyr, Leu, and Glu adjacent to the leaving group at neutral or slightly basic pH. The proteasome has an ATP-dependent proteolytic activity. The protein is Probable proteasome subunit beta type-4 (pcb-4) of Neurospora crassa (strain ATCC 24698 / 74-OR23-1A / CBS 708.71 / DSM 1257 / FGSC 987).